We begin with the raw amino-acid sequence, 480 residues long: MDKFQSKFTRFGFISICFGSIALVLLISHCSTSFFDYSFQKFKFSFPEETELRRNVYTSSSGEENRVVVDSRHVSQQILTVRSTNSTLQSKPEKLNRRNLVEQGLAKARASILEASSNVNTTLFKSDLPNSEIYRNPSALYRSYLEMEKRFKVYVYEEGEPPLVHDGPCKSVYAVEGRFITEMEKRRTKFRTYDPNQAYVYFLPFSVTWLVRYLYEGNSDAKPLKTFVSDYIRLVSTNHPFWNRTNGADHFMLTCHDWGPLTSQANRDLFNTSIRVMCNANSSEGFNPTKDVTLPEIKLYGGEVDHKLRLSKTLSASPRPYLGFFAGGVHGPVRPILLKHWKQRDLDMPVYEYLPKHLNYYDFMRSSKFCFCPSGYEVASPRVIEAIYSECIPVILSVNFVLPFTDVLRWETFSVLVDVSEIPRLKEILMSISNEKYEWLKSNLRYVRRHFELNDPPQRFDAFHLTLHSIWLRRLNLKLT.

The Cytoplasmic portion of the chain corresponds to M1–R10. A helical; Signal-anchor for type II membrane protein transmembrane segment spans residues F11–S31. The Lumenal segment spans residues T32–T480. N-linked (GlcNAc...) asparagine glycosylation is found at N85, N120, N243, N271, and N281.

The protein belongs to the glycosyltransferase 47 family.

The protein localises to the golgi apparatus membrane. Functionally, may be involved in cell wall biosynthesis. This chain is Probable glycosyltransferase At5g25310, found in Arabidopsis thaliana (Mouse-ear cress).